An 880-amino-acid polypeptide reads, in one-letter code: Translation initiation factor IF-2 (880 aa).

The interval 259–281 is disordered; sequence KNREEARAVGRSSKSQSKRKSST. Residues 379 to 548 enclose the tr-type G domain; the sequence is SRAPVVTIMG…LLQAEVLELK (170 aa). Residues 388 to 395 are G1; that stretch reads GHVDHGKT. Position 388 to 395 (388 to 395) interacts with GTP; sequence GHVDHGKT. The interval 413–417 is G2; sequence GITQH. Residues 434–437 form a G3 region; that stretch reads DTPG. GTP is bound by residues 434–438 and 488–491; these read DTPGH and NKID. Residues 488 to 491 are G4; it reads NKID. The tract at residues 524–526 is G5; sequence SAK.

Belongs to the TRAFAC class translation factor GTPase superfamily. Classic translation factor GTPase family. IF-2 subfamily.

It localises to the cytoplasm. One of the essential components for the initiation of protein synthesis. Protects formylmethionyl-tRNA from spontaneous hydrolysis and promotes its binding to the 30S ribosomal subunits. Also involved in the hydrolysis of GTP during the formation of the 70S ribosomal complex. The sequence is that of Translation initiation factor IF-2 from Baumannia cicadellinicola subsp. Homalodisca coagulata.